Reading from the N-terminus, the 483-residue chain is Acetyl-coenzyme A carboxylase carboxyl transferase subunit beta, chloroplastic (483 aa).

The 263-residue stretch at 221–483 (LWVQCENCYG…FQFHGFFPRP (263 aa)) folds into the CoA carboxyltransferase N-terminal domain. 4 residues coordinate Zn(2+): C225, C228, C244, and C247. The C4-type zinc-finger motif lies at 225 to 247 (CENCYGLNYKKFFSSKMNICEQC).

The protein belongs to the AccD/PCCB family. As to quaternary structure, acetyl-CoA carboxylase is a heterohexamer composed of biotin carboxyl carrier protein, biotin carboxylase and 2 subunits each of ACCase subunit alpha and ACCase plastid-coded subunit beta (accD). Requires Zn(2+) as cofactor.

It is found in the plastid. Its subcellular location is the chloroplast stroma. The catalysed reaction is N(6)-carboxybiotinyl-L-lysyl-[protein] + acetyl-CoA = N(6)-biotinyl-L-lysyl-[protein] + malonyl-CoA. Its pathway is lipid metabolism; malonyl-CoA biosynthesis; malonyl-CoA from acetyl-CoA: step 1/1. In terms of biological role, component of the acetyl coenzyme A carboxylase (ACC) complex. Biotin carboxylase (BC) catalyzes the carboxylation of biotin on its carrier protein (BCCP) and then the CO(2) group is transferred by the transcarboxylase to acetyl-CoA to form malonyl-CoA. This chain is Acetyl-coenzyme A carboxylase carboxyl transferase subunit beta, chloroplastic, found in Nuphar advena (Common spatterdock).